We begin with the raw amino-acid sequence, 388 residues long: MRFSIRRFFSAASGGAIILLLSALLGLLLSNSFLSESYFKVLHLKMPFSALDDAPNLAEFISIAPMSLFFFVVIAEIKEEIISGHLASFRRVILPLISALGGMMIPACLYGLITSGHLEVSRGWAIPIATDAAFTLPIILALGRHVSEGARVWLMALAIFDDLLGIVVIALFYASHLNGYALFAAGLITAVMIGLNKKSVQNLWVYASAGVVLWWALLVSGLHPTIAGVITGLALPSVADQPEKASPLERGKQIIAPWVTWLILPLFGFVSMGMSLSAMSFHVLLAPVPLGVALGLFLGKPIGVFGATIMATRLKIATLPKGTSLRMLFGLSLLCGIGFTISLFIAELAFSGSDFLVPAKYGILMGSLLSALAGWLWLRFLKFPAKGV.

11 consecutive transmembrane segments (helical) span residues 8–28 (FFSAASGGAIILLLSALLGLL), 57–77 (LAEFISIAPMSLFFFVVIAEI), 93–113 (ILPLISALGGMMIPACLYGLI), 123–143 (GWAIPIATDAAFTLPIILALG), 152–172 (VWLMALAIFDDLLGIVVIALF), 175–195 (SHLNGYALFAAGLITAVMIGL), 210–230 (GVVLWWALLVSGLHPTIAGVI), 254–274 (IIAPWVTWLILPLFGFVSMGM), 278–298 (AMSFHVLLAPVPLGVALGLFL), 328–348 (LFGLSLLCGIGFTISLFIAEL), and 361–381 (YGILMGSLLSALAGWLWLRFL).

The protein belongs to the NhaA Na(+)/H(+) (TC 2.A.33) antiporter family.

It localises to the cell inner membrane. The catalysed reaction is Na(+)(in) + 2 H(+)(out) = Na(+)(out) + 2 H(+)(in). Functionally, na(+)/H(+) antiporter that extrudes sodium in exchange for external protons. In Zymomonas mobilis subsp. mobilis (strain ATCC 31821 / ZM4 / CP4), this protein is Na(+)/H(+) antiporter NhaA.